Consider the following 155-residue polypeptide: Riboflavin synthase (155 aa).

This sequence belongs to the DMRL synthase family.

It catalyses the reaction 2 6,7-dimethyl-8-(1-D-ribityl)lumazine + H(+) = 5-amino-6-(D-ribitylamino)uracil + riboflavin. It participates in cofactor biosynthesis; riboflavin biosynthesis; riboflavin from 2-hydroxy-3-oxobutyl phosphate and 5-amino-6-(D-ribitylamino)uracil: step 2/2. The polypeptide is Riboflavin synthase (ribC) (Aeropyrum pernix (strain ATCC 700893 / DSM 11879 / JCM 9820 / NBRC 100138 / K1)).